The following is a 298-amino-acid chain: N-acetylmuramic acid 6-phosphate etherase (298 aa).

Positions 55–218 constitute an SIS domain; it reads IHAQVSGGGR…STGLMIKSGK (164 aa). Residue glutamate 83 is the Proton donor of the active site. Glutamate 114 is an active-site residue.

The protein belongs to the GCKR-like family. MurNAc-6-P etherase subfamily. In terms of assembly, homodimer.

The catalysed reaction is N-acetyl-D-muramate 6-phosphate + H2O = N-acetyl-D-glucosamine 6-phosphate + (R)-lactate. It participates in amino-sugar metabolism; 1,6-anhydro-N-acetylmuramate degradation. The protein operates within amino-sugar metabolism; N-acetylmuramate degradation. It functions in the pathway cell wall biogenesis; peptidoglycan recycling. Functionally, specifically catalyzes the cleavage of the D-lactyl ether substituent of MurNAc 6-phosphate, producing GlcNAc 6-phosphate and D-lactate. Together with AnmK, is also required for the utilization of anhydro-N-acetylmuramic acid (anhMurNAc) either imported from the medium or derived from its own cell wall murein, and thus plays a role in cell wall recycling. This is N-acetylmuramic acid 6-phosphate etherase from Escherichia coli O7:K1 (strain IAI39 / ExPEC).